The sequence spans 232 residues: Ubiquinone biosynthesis O-methyltransferase (232 aa).

4 residues coordinate S-adenosyl-L-methionine: R36, G55, D76, and M120.

It belongs to the methyltransferase superfamily. UbiG/COQ3 family.

The catalysed reaction is a 3-demethylubiquinol + S-adenosyl-L-methionine = a ubiquinol + S-adenosyl-L-homocysteine + H(+). It catalyses the reaction a 3-(all-trans-polyprenyl)benzene-1,2-diol + S-adenosyl-L-methionine = a 2-methoxy-6-(all-trans-polyprenyl)phenol + S-adenosyl-L-homocysteine + H(+). It functions in the pathway cofactor biosynthesis; ubiquinone biosynthesis. O-methyltransferase that catalyzes the 2 O-methylation steps in the ubiquinone biosynthetic pathway. This chain is Ubiquinone biosynthesis O-methyltransferase, found in Burkholderia orbicola (strain MC0-3).